A 209-amino-acid chain; its full sequence is Nucleoside triphosphate pyrophosphatase (209 aa).

The active-site Proton acceptor is the Asp-79.

It belongs to the Maf family. The cofactor is a divalent metal cation.

It is found in the cytoplasm. The catalysed reaction is a ribonucleoside 5'-triphosphate + H2O = a ribonucleoside 5'-phosphate + diphosphate + H(+). It catalyses the reaction a 2'-deoxyribonucleoside 5'-triphosphate + H2O = a 2'-deoxyribonucleoside 5'-phosphate + diphosphate + H(+). Nucleoside triphosphate pyrophosphatase. May have a dual role in cell division arrest and in preventing the incorporation of modified nucleotides into cellular nucleic acids. The polypeptide is Nucleoside triphosphate pyrophosphatase (Mycolicibacterium gilvum (strain PYR-GCK) (Mycobacterium gilvum (strain PYR-GCK))).